A 473-amino-acid polypeptide reads, in one-letter code: Photosystem II CP43 reaction center protein (473 aa).

Residues 1 to 14 (MKTLYSLRRFYPVE) constitute a propeptide that is removed on maturation. At Thr15 the chain carries N-acetylthreonine. A Phosphothreonine modification is found at Thr15. Transmembrane regions (helical) follow at residues 69-93 (LFEV…PHLA), 134-155 (LIGP…KDRN), 178-200 (KALY…RKIT), 255-275 (KPFA…LSYS), and 291-312 (WFNN…ASQA). Glu367 is a binding site for [CaMn4O5] cluster. A helical membrane pass occupies residues 447–471 (RARAAAAGFEKGIDRDFEPVLSMTP).

Belongs to the PsbB/PsbC family. PsbC subfamily. In terms of assembly, PSII is composed of 1 copy each of membrane proteins PsbA, PsbB, PsbC, PsbD, PsbE, PsbF, PsbH, PsbI, PsbJ, PsbK, PsbL, PsbM, PsbT, PsbX, PsbY, PsbZ, Psb30/Ycf12, at least 3 peripheral proteins of the oxygen-evolving complex and a large number of cofactors. It forms dimeric complexes. It depends on Binds multiple chlorophylls and provides some of the ligands for the Ca-4Mn-5O cluster of the oxygen-evolving complex. It may also provide a ligand for a Cl- that is required for oxygen evolution. PSII binds additional chlorophylls, carotenoids and specific lipids. as a cofactor.

It is found in the plastid. The protein localises to the chloroplast thylakoid membrane. Its function is as follows. One of the components of the core complex of photosystem II (PSII). It binds chlorophyll and helps catalyze the primary light-induced photochemical processes of PSII. PSII is a light-driven water:plastoquinone oxidoreductase, using light energy to abstract electrons from H(2)O, generating O(2) and a proton gradient subsequently used for ATP formation. This chain is Photosystem II CP43 reaction center protein, found in Cryptomeria japonica (Japanese cedar).